The sequence spans 371 residues: MNDWKRIVVKVGTSSITDERGNPSGEKILSLVRECVKLMRANKEVVLVSSGAIASGREIMQKLSKRKDLPAKQALSAVGQVRLMQYYSQLFSIFKQPIAQILLTAEDLRDRKRYINISQTFETLIEEKVVPIVNENDTVAVEEIKIGDNDTLSAKVACAINADLLVILSDVEGLYSEDPNLSPNAVLIRDIYEIDEKIEKIAGPGKGTGGMYTKVQAAKIVTEAGIPMILAKADLENVLERIVLKKEKVGTMFYPVERHLNRRKHWMLFMAKPQGKVYIDDGAKDALLKKGKSLLPVGVKKIEGEFVRGDTVSILDLTGEEIGRGITNYDSSELERIKGKNTEEIKNILGEDFYEEVIHRNNLVLINRGDS.

K10 lines the ATP pocket. Substrate is bound by residues S50, D137, and N149. ATP is bound by residues S169–D170 and T208–K214. The 79-residue stretch at Q274–D352 folds into the PUA domain.

It belongs to the glutamate 5-kinase family.

The protein localises to the cytoplasm. It catalyses the reaction L-glutamate + ATP = L-glutamyl 5-phosphate + ADP. The protein operates within amino-acid biosynthesis; L-proline biosynthesis; L-glutamate 5-semialdehyde from L-glutamate: step 1/2. Its function is as follows. Catalyzes the transfer of a phosphate group to glutamate to form L-glutamate 5-phosphate. The sequence is that of Glutamate 5-kinase from Dictyoglomus thermophilum (strain ATCC 35947 / DSM 3960 / H-6-12).